We begin with the raw amino-acid sequence, 369 residues long: Anhydro-N-acetylmuramic acid kinase (369 aa).

12 to 19 (GTSLDGVD) lines the ATP pocket.

Belongs to the anhydro-N-acetylmuramic acid kinase family.

It catalyses the reaction 1,6-anhydro-N-acetyl-beta-muramate + ATP + H2O = N-acetyl-D-muramate 6-phosphate + ADP + H(+). It participates in amino-sugar metabolism; 1,6-anhydro-N-acetylmuramate degradation. It functions in the pathway cell wall biogenesis; peptidoglycan recycling. Catalyzes the specific phosphorylation of 1,6-anhydro-N-acetylmuramic acid (anhMurNAc) with the simultaneous cleavage of the 1,6-anhydro ring, generating MurNAc-6-P. Is required for the utilization of anhMurNAc either imported from the medium or derived from its own cell wall murein, and thus plays a role in cell wall recycling. In Escherichia coli O81 (strain ED1a), this protein is Anhydro-N-acetylmuramic acid kinase.